A 285-amino-acid polypeptide reads, in one-letter code: Bifunctional protein FolD (285 aa).

166–168 is a binding site for NADP(+); it reads GAS.

This sequence belongs to the tetrahydrofolate dehydrogenase/cyclohydrolase family. Homodimer.

It catalyses the reaction (6R)-5,10-methylene-5,6,7,8-tetrahydrofolate + NADP(+) = (6R)-5,10-methenyltetrahydrofolate + NADPH. The catalysed reaction is (6R)-5,10-methenyltetrahydrofolate + H2O = (6R)-10-formyltetrahydrofolate + H(+). It functions in the pathway one-carbon metabolism; tetrahydrofolate interconversion. Functionally, catalyzes the oxidation of 5,10-methylenetetrahydrofolate to 5,10-methenyltetrahydrofolate and then the hydrolysis of 5,10-methenyltetrahydrofolate to 10-formyltetrahydrofolate. This chain is Bifunctional protein FolD, found in Thioalkalivibrio sulfidiphilus (strain HL-EbGR7).